The primary structure comprises 298 residues: Zinc import ATP-binding protein ZnuC (298 aa).

The ABC transporter domain maps to 17 to 232 (IELRNAGVYR…PEYVRLFGSR (216 aa)). 49–56 (GPNGAGKS) contacts ATP. The tract at residues 273 to 298 (RGHCHVEDGHHHDHEHHHHEGGQPRA) is disordered. Basic and acidic residues predominate over residues 276–298 (CHVEDGHHHDHEHHHHEGGQPRA).

This sequence belongs to the ABC transporter superfamily. Zinc importer (TC 3.A.1.15.5) family. The complex is composed of two ATP-binding proteins (ZnuC), two transmembrane proteins (ZnuB) and a solute-binding protein (ZnuA).

It localises to the cell inner membrane. The catalysed reaction is Zn(2+)(out) + ATP(in) + H2O(in) = Zn(2+)(in) + ADP(in) + phosphate(in) + H(+)(in). Its function is as follows. Part of the ABC transporter complex ZnuABC involved in zinc import. Responsible for energy coupling to the transport system. This is Zinc import ATP-binding protein ZnuC from Brucella abortus (strain 2308).